A 63-amino-acid polypeptide reads, in one-letter code: Large ribosomal subunit protein bL35 (63 aa).

It belongs to the bacterial ribosomal protein bL35 family.

This Campylobacter fetus subsp. fetus (strain 82-40) protein is Large ribosomal subunit protein bL35.